The primary structure comprises 173 residues: Photosystem I assembly protein Ycf3 (173 aa).

3 TPR repeats span residues 35–68 (AYIY…EENK), 72–105 (GETL…NPKQ), and 120–153 (GRNA…YPGG).

Belongs to the Ycf3 family.

It localises to the cellular thylakoid membrane. Functionally, essential for the assembly of the photosystem I (PSI) complex. May act as a chaperone-like factor to guide the assembly of the PSI subunits. This Prochlorococcus marinus (strain MIT 9301) protein is Photosystem I assembly protein Ycf3.